The following is an 879-amino-acid chain: DNA mismatch repair protein MutS (879 aa).

639-646 (GPNMGGKS) provides a ligand contact to ATP.

This sequence belongs to the DNA mismatch repair MutS family.

In terms of biological role, this protein is involved in the repair of mismatches in DNA. It is possible that it carries out the mismatch recognition step. This protein has a weak ATPase activity. This Aromatoleum aromaticum (strain DSM 19018 / LMG 30748 / EbN1) (Azoarcus sp. (strain EbN1)) protein is DNA mismatch repair protein MutS.